The following is a 491-amino-acid chain: MPGARDALCHQALQLLAELCARGALEHDSCQDFIYHLRDRARPRLRDPDISVSLLTLVVTACGLALFGVSLFVSWKLCWVPWRERGLFSGSKDNNQEPLNYTDTETNEQENSEDFLDPPTPCPDSSMKISHTSPDIPLSTQPGGQDNCAHAVRVQRQVTEPTPSARHNSIRRQLNLSNPDFNIQQLQRQEQLTGIGRIKPELYKQRSLDNDDGRRSNSKACGKLNFILKYDCDLEQLIVKIHKAVNLPAKDFSGTSDPYVKIYLLPDRKTKHQTKVHRKTLNPVFDEVFLFPVHYNDLEARKLHFSVYDFDRFSRHDLIGQVVVDHFFDLADFPRECILWKDIEYVTNDNVDLGELMFSLCYLPTAGRLTITIIKARNLKAMDITGASDPYVKVSLMCDGRRLKKRKTSTKRNTLNPVYNEAIVFDVPPESIDQIHLSIAVMDYDRVGHNEVIGVCQVGNEAERLGRDHWSEMLSYPRKPIAHWHSLLEKR.

The Vesicular portion of the chain corresponds to 1–52; sequence MPGARDALCHQALQLLAELCARGALEHDSCQDFIYHLRDRARPRLRDPDISV. The segment at 9-31 is cysteine motif; the sequence is CHQALQLLAELCARGALEHDSCQ. A helical membrane pass occupies residues 53–73; it reads SLLTLVVTACGLALFGVSLFV. Residues 74–491 are Cytoplasmic-facing; that stretch reads SWKLCWVPWR…AHWHSLLEKR (418 aa). Polar residues predominate over residues 91–104; the sequence is SKDNNQEPLNYTDT. The disordered stretch occupies residues 91 to 147; it reads SKDNNQEPLNYTDTETNEQENSEDFLDPPTPCPDSSMKISHTSPDIPLSTQPGGQDN. The segment covering 105–116 has biased composition (acidic residues); it reads ETNEQENSEDFL. Residues 127 to 144 are compositionally biased toward polar residues; the sequence is MKISHTSPDIPLSTQPGG. Residue Ser-177 is modified to Phosphoserine. C2 domains follow at residues 220-341 and 352-485; these read ACGK…ILWK and DLGE…AHWH. Residues Asp-251, Asp-257, Asp-309, Phe-310, Asp-311, Ser-314, Asp-317, Asp-383, Asp-389, Asp-443, and Asp-445 each contribute to the Ca(2+) site.

The protein belongs to the synaptotagmin family. In terms of assembly, homodimer; disulfide-linked via the cysteine motif. Can also form heterodimers with SYT3, SYT6, SYT7 and SYT10. Requires Ca(2+) as cofactor.

Its subcellular location is the cytoplasmic vesicle. The protein localises to the secretory vesicle. It is found in the synaptic vesicle membrane. May be involved in Ca(2+)-dependent exocytosis of secretory vesicles through Ca(2+) and phospholipid binding to the C2 domain or may serve as Ca(2+) sensors in the process of vesicular trafficking and exocytosis. The polypeptide is Synaptotagmin-9 (Syt9) (Rattus norvegicus (Rat)).